A 742-amino-acid polypeptide reads, in one-letter code: ATP-dependent RNA helicase DBP7 (742 aa).

Residues 45-100 (GKTVSRKRKANTTGDEGIIPGRGENSIKKLHKESSYSSEEQEKYKGRNAHNTQGRT) are disordered. A Q motif motif is present at residues 143–172 (DQFASLGVSSLLVSHLEQKMRIKKPTSIQK). Residues 178 to 372 (IIGNAGKNDF…NVALKDYKLI (195 aa)) form the Helicase ATP-binding domain. Residue 191-198 (AQTGSGKT) participates in ATP binding. The DEGD box signature appears at 307–310 (DEGD). The Helicase C-terminal domain maps to 405–605 (TLAATLNNIT…ILMPAFKDVN (201 aa)). Residues 701–726 (AMGLQSSKDGNSEKKPTKENSKNKMF) form a disordered region. Over residues 710–722 (GNSEKKPTKENSK) the composition is skewed to basic and acidic residues.

This sequence belongs to the DEAD box helicase family. DDX31/DBP7 subfamily.

It localises to the nucleus. The protein localises to the nucleolus. It carries out the reaction ATP + H2O = ADP + phosphate + H(+). Its function is as follows. ATP-binding RNA helicase involved in the biogenesis of 60S ribosomal subunits and is required for the normal formation of 25S and 5.8S rRNAs. In Saccharomyces cerevisiae (strain ATCC 204508 / S288c) (Baker's yeast), this protein is ATP-dependent RNA helicase DBP7 (DBP7).